The following is a 303-amino-acid chain: Glycine--tRNA ligase alpha subunit (303 aa).

This sequence belongs to the class-II aminoacyl-tRNA synthetase family. In terms of assembly, tetramer of two alpha and two beta subunits.

It localises to the cytoplasm. It catalyses the reaction tRNA(Gly) + glycine + ATP = glycyl-tRNA(Gly) + AMP + diphosphate. The protein is Glycine--tRNA ligase alpha subunit of Cronobacter sakazakii (strain ATCC BAA-894) (Enterobacter sakazakii).